The sequence spans 564 residues: Excitatory amino acid transporter 4 (564 aa).

Residues 1 to 55 (MSSHGNSLFLRESGQRLGRVGWLQRLQESLQQRALRTRLRLQTMTREHVLRFLRR) lie on the Cytoplasmic side of the membrane. A Phosphoserine modification is found at S2. 3 helical membrane-spanning segments follow: residues 56 to 76 (NAFI…AFAL), 99 to 119 (MLQM…MASL), and 133 to 153 (VYYM…VTII). Residues N216, N232, and N239 are each glycosylated (N-linked (GlcNAc...) asparagine). 3 helical membrane-spanning segments follow: residues 262-285 (SANG…IGGV), 295-322 (FFDS…LFLI), and 344-365 (LTVI…YFLI). Positions 371-401 (FPFIGGVLQALITAMGTSSSSATLPITFRCL) form an intramembrane region, discontinuously helical. 388–390 (SSS) contacts L-aspartate. A helical transmembrane segment spans residues 411 to 437 (ITRFVLPVGATVNMDGTALYEALAAIF). Na(+) is bound by residues G419, T421, and N423. Residues T427, 468–472 (IPQAG), D501, and N508 contribute to the L-aspartate site. Residues 451-484 (ITTISITATAASVGAAGIPQAGLVTMVIVLTSVG) constitute an intramembrane region (discontinuously helical). A helical membrane pass occupies residues 498–519 (WFLDRLRTMTNVLGDSIGAAVI). Residues N508 and D512 each contribute to the Na(+) site.

The protein belongs to the dicarboxylate/amino acid:cation symporter (DAACS) (TC 2.A.23) family. SLC1A6 subfamily. Homotrimer. In terms of tissue distribution, detected in brain, cerebellum and hippocampus.

Its subcellular location is the cell membrane. It carries out the reaction K(+)(in) + L-glutamate(out) + 3 Na(+)(out) + H(+)(out) = K(+)(out) + L-glutamate(in) + 3 Na(+)(in) + H(+)(in). It catalyses the reaction K(+)(in) + L-aspartate(out) + 3 Na(+)(out) + H(+)(out) = K(+)(out) + L-aspartate(in) + 3 Na(+)(in) + H(+)(in). The catalysed reaction is D-aspartate(out) + K(+)(in) + 3 Na(+)(out) + H(+)(out) = D-aspartate(in) + K(+)(out) + 3 Na(+)(in) + H(+)(in). Functionally, sodium-dependent, high-affinity amino acid transporter that mediates the uptake of L-glutamate and also L-aspartate and D-aspartate. Functions as a symporter that transports one amino acid molecule together with two or three Na(+) ions and one proton, in parallel with the counter-transport of one K(+) ion. Mediates Cl(-) flux that is not coupled to amino acid transport; this avoids the accumulation of negative charges due to aspartate and Na(+) symport. Plays a redundant role in the rapid removal of released glutamate from the synaptic cleft, which is essential for terminating the postsynaptic action of glutamate. This chain is Excitatory amino acid transporter 4 (SLC1A6), found in Canis lupus familiaris (Dog).